The primary structure comprises 152 residues: Lipoprotein signal peptidase (152 aa).

The next 2 helical transmembrane spans lie at 55-75 (NKMWFFYIITVVFVVFIVFYM) and 85-105 (LGISLGLILGGAIGNFIDRVF). Residues aspartate 111 and aspartate 129 contribute to the active site. Residues 124–144 (VFNIADSALCIGVVLIIIQTL) form a helical membrane-spanning segment.

This sequence belongs to the peptidase A8 family.

It is found in the cell membrane. The catalysed reaction is Release of signal peptides from bacterial membrane prolipoproteins. Hydrolyzes -Xaa-Yaa-Zaa-|-(S,diacylglyceryl)Cys-, in which Xaa is hydrophobic (preferably Leu), and Yaa (Ala or Ser) and Zaa (Gly or Ala) have small, neutral side chains.. The protein operates within protein modification; lipoprotein biosynthesis (signal peptide cleavage). This protein specifically catalyzes the removal of signal peptides from prolipoproteins. This Bacillus cereus (strain G9842) protein is Lipoprotein signal peptidase.